A 146-amino-acid chain; its full sequence is Leghemoglobin alpha (146 aa).

The Globin domain maps to 3-146 (AFTEKQEALV…LAAAIKKAYA (144 aa)). Nitrated tyrosine is present on residues Tyr26 and Tyr31. Ser46 contributes to the heme b binding site. Residue Ser46 is modified to Phosphoserine. Residue His62 participates in O2 binding. Positions 93 and 96 each coordinate heme b. Tyr134 is subject to Nitrated tyrosine.

Belongs to the plant globin family. Monomer. Nitrated mainly at Tyr-31 and, to a lower extent, at Tyr-26 and Tyr-134, in effective nodules and particularly in hypoxic conditions; this mechanism may play a protective role in the symbiosis by buffering toxic peroxynitrite NO(2)(-). Nitration level decrease during nodule senescence. In terms of processing, phosphorylation at Ser-46 disrupts the molecular environment of its porphyrin ring oxygen binding pocket, thus leading to a reduced oxygen consumption and to the delivery of oxygen O(2) to symbiosomes. As to expression, root nodules.

The protein resides in the cytoplasm. It localises to the cytosol. The protein localises to the nucleus. Leghemoglobin that reversibly binds oxygen O(2) through a pentacoordinated heme iron. In root nodules, facilitates the diffusion of oxygen to the bacteroids while preventing the bacterial nitrogenase from being inactivated by buffering dioxygen, nitric oxide and carbon monoxide, and promoting the formation of reactive oxygen species (ROS, e.g. H(2)O(2)). This role is essential for symbiotic nitrogen fixation (SNF). This is Leghemoglobin alpha from Phaseolus vulgaris (Kidney bean).